The chain runs to 657 residues: MRDTTGGPAGAEVWTVPGLLGARKLDLLALIPLVAIVALMTLVGALLFAVAQSDANRARAKLATDALWVEQTLRFQMAVDEDVLVRLALDASAGASQQALSARARLHLAANPETLGLRWYDATGRLIAAVPEGPGPAEAALVRQLLASGALPPRPVYGPVRDGRVVLAERVSASGGVVVATVSLPMMLERHLPWWIAEQYGVRISDTSGVLAERARRPIAAAAPRHGISFDPPLAGTTLEIMAYDAPDAFGNAALLAAIGALSVFAVLAMVVLHRNALRRRMAEDRLRAEMAFRRAMEESLTVGMRAKDLSGRILYVNGAFCKLVGLAAEDLVGRAQPMPYWAPDFLEETLARQRQLIEGQPVPQAFETRFRRSDGSEIEVQVFEAPLIDAGGRHRGWMGSVIDITQAKQAARLARAQDESLARTGRLVTLGEMASTLAHELNQPLAAIASYAAGGLNLFDQPEPNLTMLRQAFEKMGAQARRAGLVIRRVQDFVKKRTPQLAALDLSEVLAEALSITAPVAREHRVKLASLIEGRIPGVQADRILIEQVLVNLIRNGVEAMAEGPRTGDDLTVRLARAGAAVTIEVMDRGPGISDAVAASLFDPFTSTKSEGMGMGLNICRSIVEMHHGSLSHGPRAGGGTVFTVTLPVPQEGAPA.

The Cytoplasmic segment spans residues 1–26; it reads MRDTTGGPAGAEVWTVPGLLGARKLD. A helical transmembrane segment spans residues 27 to 51; sequence LLALIPLVAIVALMTLVGALLFAVA. The Periplasmic portion of the chain corresponds to 52 to 252; the sequence is QSDANRARAK…AYDAPDAFGN (201 aa). The helical transmembrane segment at 253–273 threads the bilayer; it reads AALLAAIGALSVFAVLAMVVL. At 274-657 the chain is on the cytoplasmic side; sequence HRNALRRRMA…LPVPQEGAPA (384 aa). Residues 289-361 form the PAS domain; that stretch reads AEMAFRRAME…ARQRQLIEGQ (73 aa). The region spanning 365–417 is the PAC domain; the sequence is QAFETRFRRSDGSEIEVQVFEAPLIDAGGRHRGWMGSVIDITQAKQAARLARA. The tract at residues 407–422 is inter-domain linker; sequence QAKQAARLARAQDESL. In terms of domain architecture, Histidine kinase spans 437 to 652; that stretch reads TLAHELNQPL…VFTVTLPVPQ (216 aa). Phosphohistidine; by autocatalysis is present on H440.

Its subcellular location is the cell inner membrane. It carries out the reaction ATP + protein L-histidine = ADP + protein N-phospho-L-histidine.. Its function is as follows. Member of the two-component regulatory system DctS/DctR involved in the transport of C4-dicarboxylates. DctS functions as a membrane-associated protein kinase that phosphorylates DctR in response to environmental signals. The sequence is that of C4-dicarboxylate transport sensor protein DctS (dctS) from Rhodobacter capsulatus (Rhodopseudomonas capsulata).